Consider the following 178-residue polypeptide: Cytochrome b6-f complex iron-sulfur subunit 3 (178 aa).

Residues 20 to 42 (FITGATVAVTAGAALYPAGKFLI) traverse the membrane as a helical segment. The 97-residue stretch at 65–161 (PASQILAEPP…VAVIDNSILI (97 aa)) folds into the Rieske domain. Residues Cys-107, His-109, Cys-125, and His-128 each contribute to the [2Fe-2S] cluster site. A disulfide bond links Cys-112 and Cys-127.

It belongs to the Rieske iron-sulfur protein family. The 4 large subunits of the cytochrome b6-f complex are cytochrome b6, subunit IV (17 kDa polypeptide, PetD), cytochrome f and the Rieske protein, while the 4 small subunits are PetG, PetL, PetM and PetN. The complex functions as a dimer. [2Fe-2S] cluster serves as cofactor.

It localises to the cellular thylakoid membrane. It carries out the reaction 2 oxidized [plastocyanin] + a plastoquinol + 2 H(+)(in) = 2 reduced [plastocyanin] + a plastoquinone + 4 H(+)(out). In terms of biological role, component of the cytochrome b6-f complex, which mediates electron transfer between photosystem II (PSII) and photosystem I (PSI), cyclic electron flow around PSI, and state transitions. This is Cytochrome b6-f complex iron-sulfur subunit 3 from Nostoc sp. (strain PCC 7120 / SAG 25.82 / UTEX 2576).